The chain runs to 120 residues: Large ribosomal subunit protein bL17 (120 aa).

This sequence belongs to the bacterial ribosomal protein bL17 family. As to quaternary structure, part of the 50S ribosomal subunit. Contacts protein L32.

The protein is Large ribosomal subunit protein bL17 of Halalkalibacterium halodurans (strain ATCC BAA-125 / DSM 18197 / FERM 7344 / JCM 9153 / C-125) (Bacillus halodurans).